Consider the following 203-residue polypeptide: N-(5'-phosphoribosyl)anthranilate isomerase (203 aa).

This sequence belongs to the TrpF family.

The enzyme catalyses N-(5-phospho-beta-D-ribosyl)anthranilate = 1-(2-carboxyphenylamino)-1-deoxy-D-ribulose 5-phosphate. It functions in the pathway amino-acid biosynthesis; L-tryptophan biosynthesis; L-tryptophan from chorismate: step 3/5. The chain is N-(5'-phosphoribosyl)anthranilate isomerase from Geobacter sulfurreducens (strain ATCC 51573 / DSM 12127 / PCA).